The primary structure comprises 229 residues: MAKLTKKMKAIKAGVDSTKAYEINEALALLKQFATAKFNESVDVAVNLGIDPRKSDQNVRGATVLPHGTGRTVRVAVFTQGANAEAAKEAGADLIGMEDLAEQVKKGEMDFDVVIASPDAMRVVGQLGQILGPRGLMPNPKVGTVTPNVAEAVKNAKSGQVRYRNDKNGIIHTTIGKASFSEEQLKENLQALLAALAKARPTTAKGIFIKKVSVSTTQGAGVQVDQSSL.

This sequence belongs to the universal ribosomal protein uL1 family. Part of the 50S ribosomal subunit.

Functionally, binds directly to 23S rRNA. The L1 stalk is quite mobile in the ribosome, and is involved in E site tRNA release. In terms of biological role, protein L1 is also a translational repressor protein, it controls the translation of the L11 operon by binding to its mRNA. This chain is Large ribosomal subunit protein uL1, found in Actinobacillus succinogenes (strain ATCC 55618 / DSM 22257 / CCUG 43843 / 130Z).